Reading from the N-terminus, the 212-residue chain is ATP-dependent Clp protease proteolytic subunit (212 aa).

The active-site Nucleophile is the serine 107. Residue histidine 132 is part of the active site.

It belongs to the peptidase S14 family. Fourteen ClpP subunits assemble into 2 heptameric rings which stack back to back to give a disk-like structure with a central cavity, resembling the structure of eukaryotic proteasomes.

It localises to the cytoplasm. It carries out the reaction Hydrolysis of proteins to small peptides in the presence of ATP and magnesium. alpha-casein is the usual test substrate. In the absence of ATP, only oligopeptides shorter than five residues are hydrolyzed (such as succinyl-Leu-Tyr-|-NHMec, and Leu-Tyr-Leu-|-Tyr-Trp, in which cleavage of the -Tyr-|-Leu- and -Tyr-|-Trp bonds also occurs).. Cleaves peptides in various proteins in a process that requires ATP hydrolysis. Has a chymotrypsin-like activity. Plays a major role in the degradation of misfolded proteins. This chain is ATP-dependent Clp protease proteolytic subunit, found in Pseudoalteromonas atlantica (strain T6c / ATCC BAA-1087).